Here is a 255-residue protein sequence, read N- to C-terminus: Protein NEN4 (255 aa).

An Exonuclease domain is found at 11–174 (VFFDLETNVP…DDVRMNLEVL (164 aa)). Residues Asp-14 and Glu-16 each coordinate Mg(2+). His-161 serves as the catalytic Proton donor/acceptor. Asp-166 serves as a coordination point for Mg(2+).

Requires Mg(2+) as cofactor. In terms of tissue distribution, expressed in the sieve elements and phloem pole pericycle cells.

It localises to the nucleus. In terms of biological role, probable exonuclease required for enuclation of sieve elements. This chain is Protein NEN4, found in Arabidopsis thaliana (Mouse-ear cress).